We begin with the raw amino-acid sequence, 80 residues long: MSKVLKVGLLLLLVAVAASAYAVAEENGAPKENKQLPQIDDYGVTNKCPANQPFKWNCNYCTCGPEGKDASCTRMACPQH.

The signal sequence occupies residues Met-1 to Ala-24. Positions Glu-25–Lys-47 are excised as a propeptide. In terms of domain architecture, Pacifastin spans Thr-45–His-80. Cystine bridges form between Cys-48–Cys-63, Cys-58–Cys-77, and Cys-61–Cys-72.

The protein belongs to the protease inhibitor I19 family. In terms of tissue distribution, expressed in the venom apparatus. Low transcript levels are also detected in other tissues.

It is found in the secreted. Parasitic wasp protein that may interfere with the host immune response. The recombinant protein inhibits trypsin activity and prophenoloxidase (PPO) activation, an enzyme essential for both clotting and insect innate immune responses. It does not inhibit activity of chymotrypsin and protease K, and has no effect on phenoloxidase (PO) activity. In Nasonia vitripennis (Parasitic wasp), this protein is Small pacifastin protease inhibitor.